The sequence spans 269 residues: Protein MGF 110-1L (269 aa).

An N-terminal signal peptide occupies residues 1-26 (MLGLQIFTLLSIPTLLYTYELELLDL). The stretch at 1–145 (MLGLQIFTLL…YVRKRSLQTV (145 aa)) is one A repeat. Over 27-116 (TRTPPEKELE…HEWHEAVIRK (90 aa)) the chain is Extracellular. N-linked (GlcNAc...) asparagine; by host glycosylation occurs at Asn75. The helical transmembrane segment at 117-137 (WQKLLTYGFYLVGCVLVANYV) threads the bilayer. Residues 138–144 (RKRSLQT) are Cytoplasmic-facing. Residues 145-165 (VMYLLVLLVIFFLLSQLMLYR) form a helical membrane-spanning segment. Residues 147-269 (YLLVLLVIFF…DNLMKKQDIM (123 aa)) form a B repeat. The Extracellular portion of the chain corresponds to 166 to 269 (ELEDKKHKIG…DNLMKKQDIM (104 aa)).

The protein belongs to the asfivirus MGF 110 family.

Its subcellular location is the host membrane. Its function is as follows. Plays a role in virus cell tropism, and may be required for efficient virus replication in macrophages. The polypeptide is Protein MGF 110-1L (African swine fever virus (isolate Warthog/Namibia/Wart80/1980) (ASFV)).